The chain runs to 491 residues: Probable glycine dehydrogenase (decarboxylating) subunit 2 (491 aa).

Lysine 274 is modified (N6-(pyridoxal phosphate)lysine).

It belongs to the GcvP family. C-terminal subunit subfamily. In terms of assembly, the glycine cleavage system is composed of four proteins: P, T, L and H. In this organism, the P 'protein' is a heterodimer of two subunits. The cofactor is pyridoxal 5'-phosphate.

It catalyses the reaction N(6)-[(R)-lipoyl]-L-lysyl-[glycine-cleavage complex H protein] + glycine + H(+) = N(6)-[(R)-S(8)-aminomethyldihydrolipoyl]-L-lysyl-[glycine-cleavage complex H protein] + CO2. Functionally, the glycine cleavage system catalyzes the degradation of glycine. The P protein binds the alpha-amino group of glycine through its pyridoxal phosphate cofactor; CO(2) is released and the remaining methylamine moiety is then transferred to the lipoamide cofactor of the H protein. The chain is Probable glycine dehydrogenase (decarboxylating) subunit 2 from Shouchella clausii (strain KSM-K16) (Alkalihalobacillus clausii).